The sequence spans 141 residues: MAPRDKRLSSTPLEVLFFLNGWYYATYFLLELLIFLYKGLLLPYPTANLVLDVVMLLLYLGIEVIRLFFGTKGNLCQRKMPLGISVALTFPSAMMASYYLLLQTYVLRLEAIMNSILLFFCGSELLLEMLTLATFSSMDRI.

4 helical membrane passes run 15-35 (VLFF…LLIF), 49-69 (LVLD…RLFF), 82-102 (LGIS…YLLL), and 115-135 (SILL…LATF).

Part of the tectonic-like complex (also named B9 complex). Interacts with TMEM107.

The protein localises to the membrane. It is found in the cytoplasm. It localises to the cytoskeleton. Its subcellular location is the cilium basal body. In terms of biological role, part of the tectonic-like complex which is required for tissue-specific ciliogenesis and may regulate ciliary membrane composition. This Mus musculus (Mouse) protein is Transmembrane protein 216 (Tmem216).